A 450-amino-acid polypeptide reads, in one-letter code: UDP-N-acetylmuramoylalanine--D-glutamate ligase (450 aa).

Residue 119–125 (GSNGKTT) coordinates ATP.

The protein belongs to the MurCDEF family.

The protein resides in the cytoplasm. The enzyme catalyses UDP-N-acetyl-alpha-D-muramoyl-L-alanine + D-glutamate + ATP = UDP-N-acetyl-alpha-D-muramoyl-L-alanyl-D-glutamate + ADP + phosphate + H(+). It participates in cell wall biogenesis; peptidoglycan biosynthesis. Functionally, cell wall formation. Catalyzes the addition of glutamate to the nucleotide precursor UDP-N-acetylmuramoyl-L-alanine (UMA). The protein is UDP-N-acetylmuramoylalanine--D-glutamate ligase of Streptococcus pneumoniae (strain ATCC BAA-255 / R6).